Here is a 76-residue protein sequence, read N- to C-terminus: MGSFSIWHWLIVLLIVVLVFGTKKLKNIGSDLGGAVKGFKDGVRDGSTAPADPAQQVTANKSADANTVDVEAKQKS.

The helical transmembrane segment at 1–21 (MGSFSIWHWLIVLLIVVLVFG) threads the bilayer. The interval 44-76 (RDGSTAPADPAQQVTANKSADANTVDVEAKQKS) is disordered. Residues 55-65 (QQVTANKSADA) show a composition bias toward polar residues.

The protein belongs to the TatA/E family. As to quaternary structure, the Tat system comprises two distinct complexes: a TatABC complex, containing multiple copies of TatA, TatB and TatC subunits, and a separate TatA complex, containing only TatA subunits. Substrates initially bind to the TatABC complex, which probably triggers association of the separate TatA complex to form the active translocon.

Its subcellular location is the cell inner membrane. Part of the twin-arginine translocation (Tat) system that transports large folded proteins containing a characteristic twin-arginine motif in their signal peptide across membranes. TatA could form the protein-conducting channel of the Tat system. This is Sec-independent protein translocase protein TatA from Methylibium petroleiphilum (strain ATCC BAA-1232 / LMG 22953 / PM1).